Here is a 206-residue protein sequence, read N- to C-terminus: 2,3-bisphosphoglycerate-dependent phosphoglycerate mutase (206 aa).

Substrate is bound by residues 9–16 (RHGQSEWN), 22–23 (TG), R61, 88–91 (ERDY), K99, 115–116 (RR), and 159–160 (GN). H10 acts as the Tele-phosphohistidine intermediate in catalysis. Catalysis depends on E88, which acts as the Proton donor/acceptor.

The protein belongs to the phosphoglycerate mutase family. BPG-dependent PGAM subfamily. Homodimer.

It catalyses the reaction (2R)-2-phosphoglycerate = (2R)-3-phosphoglycerate. It participates in carbohydrate degradation; glycolysis; pyruvate from D-glyceraldehyde 3-phosphate: step 3/5. Catalyzes the interconversion of 2-phosphoglycerate and 3-phosphoglycerate. The polypeptide is 2,3-bisphosphoglycerate-dependent phosphoglycerate mutase (Bartonella quintana (strain Toulouse) (Rochalimaea quintana)).